The following is a 592-amino-acid chain: Threonine dehydratase biosynthetic, chloroplastic (592 aa).

The transit peptide at 1–91 (MNSVQLPTAQ…NEAENGSIAE (91 aa)) directs the protein to the chloroplast. Position 141 is an N6-(pyridoxal phosphate)lysine (Lys141). ACT-like domains follow at residues 419 to 490 (AVLA…NLTT) and 512 to 583 (VLCR…LVSD).

This sequence belongs to the serine/threonine dehydratase family. Pyridoxal 5'-phosphate is required as a cofactor.

It is found in the plastid. The protein localises to the chloroplast. It catalyses the reaction L-threonine = 2-oxobutanoate + NH4(+). The protein operates within amino-acid biosynthesis; L-isoleucine biosynthesis; 2-oxobutanoate from L-threonine: step 1/1. Its activity is regulated as follows. Allosterically inhibited by isoleucine. Strain GM11b is isoleucine feedback insensitive and is resistant to the antimetabolite L-O-methylthreonine. Catalyzes the formation of alpha-ketobutyrate from threonine in a two-step reaction. The first step is a dehydration of threonine, followed by rehydration and liberation of ammonia. In Arabidopsis thaliana (Mouse-ear cress), this protein is Threonine dehydratase biosynthetic, chloroplastic (OMR1).